The chain runs to 119 residues: UPF0102 protein PM0647 (119 aa).

This sequence belongs to the UPF0102 family.

This chain is UPF0102 protein PM0647, found in Pasteurella multocida (strain Pm70).